A 544-amino-acid polypeptide reads, in one-letter code: Chromatin assembly factor 1 subunit A (544 aa).

The segment covering 1 to 22 has biased composition (polar residues); the sequence is MNSESVDSDVAASTSNKGNELC. Disordered stretches follow at residues 1-52, 67-117, and 138-160; these read MNSE…EADE, IYNG…REQE, and QEQQ…AQRL. Positions 23–35 are enriched in low complexity; that stretch reads SSSTDITSLSVSS. Over residues 36 to 47 the composition is skewed to polar residues; that stretch reads PNESVIHSSHSA. The interval 56 to 170 is interaction with DNA and pcn1/PCNA; the sequence is KLSYEGNRKK…RQEQILNKER (115 aa). Residues 74–117 are compositionally biased toward basic and acidic residues; sequence AGKEKKLQKQRAQEERIRQKEAERLKREKERQQREQEKKLREQE. A coiled-coil region spans residues 76 to 176; it reads KEKKLQKQRA…NKERQQLKLN (101 aa). The PCNA-interaction protein (PIP box) signature appears at 172–179; the sequence is QLKLNNFF. An interaction with histones H3/H4 region spans residues 325-396; sequence SNVLLNPWLE…DKDSVNASNT (72 aa). The span at 351–388 shows a compositional bias: acidic residues; it reads DEEDDGEDLESEDEEVDNSDDIVEDGDNAFVDDEDDDK. Residues 351-400 form a disordered region; that stretch reads DEEDDGEDLESEDEEVDNSDDIVEDGDNAFVDDEDDDKDSVNASNTHRSS.

Belongs to the RLF2 family. Component of chromatin assembly factor 1 (CAF-1), composed of pcf1, pcf2 and pcf3. Interacts (via PIP motif) with pcn1/PCNA; the interaction is direct and occurs during S-phase. Interacts with swi6 at the G1/S-phase transition and early S-phase, but not in the G2 phase. The CAF-1 complex interacts with histone H3/H4 dimers.

Its subcellular location is the nucleus. In terms of biological role, acts as a component of the histone chaperone complex chromatin assembly factor 1 (CAF-1), which assembles histone octamers onto DNA during replication and repair. CAF-1 performs the first step of the nucleosome assembly process, bringing newly synthesized histones H3 and H4 to replicating DNA; histones H2A/H2B can bind to this chromatin precursor subsequent to DNA replication to complete the histone octamer. Plays a role in the maintenance of heterochromatin. This chain is Chromatin assembly factor 1 subunit A, found in Schizosaccharomyces pombe (strain 972 / ATCC 24843) (Fission yeast).